The following is a 689-amino-acid chain: Glycine--tRNA ligase beta subunit (689 aa).

Belongs to the class-II aminoacyl-tRNA synthetase family. Tetramer of two alpha and two beta subunits.

The protein resides in the cytoplasm. The enzyme catalyses tRNA(Gly) + glycine + ATP = glycyl-tRNA(Gly) + AMP + diphosphate. The sequence is that of Glycine--tRNA ligase beta subunit from Shigella boydii serotype 4 (strain Sb227).